A 602-amino-acid polypeptide reads, in one-letter code: Proteasome-associated ATPase (602 aa).

Basic and acidic residues predominate over residues 1–13 (MQHDLPGGRHDEA). The interval 1–33 (MQHDLPGGRHDEADSSETGGAGTTENPSSEQAR) is disordered. Residues 23-32 (TTENPSSEQA) are compositionally biased toward polar residues. A coiled-coil region spans residues 28-103 (SSEQARQIRF…LREEVDRLAQ (76 aa)). 291–296 (GCGKTL) lines the ATP pocket. The docks into pockets in the proteasome alpha-ring stretch occupies residues 601–602 (YL).

Belongs to the AAA ATPase family. As to quaternary structure, homohexamer. Assembles into a hexameric ring structure that caps the 20S proteasome core. Strongly interacts with the prokaryotic ubiquitin-like protein Pup through a hydrophobic interface; the interacting region of ARC lies in its N-terminal coiled-coil domain. There is one Pup binding site per ARC hexamer ring. Upon ATP-binding, the C-terminus of ARC interacts with the alpha-rings of the proteasome core, possibly by binding to the intersubunit pockets.

The protein operates within protein degradation; proteasomal Pup-dependent pathway. ATPase which is responsible for recognizing, binding, unfolding and translocation of pupylated proteins into the bacterial 20S proteasome core particle. May be essential for opening the gate of the 20S proteasome via an interaction with its C-terminus, thereby allowing substrate entry and access to the site of proteolysis. Thus, the C-termini of the proteasomal ATPase may function like a 'key in a lock' to induce gate opening and therefore regulate proteolysis. The polypeptide is Proteasome-associated ATPase (Saccharomonospora viridis (strain ATCC 15386 / DSM 43017 / JCM 3036 / CCUG 5913 / NBRC 12207 / NCIMB 9602 / P101) (Thermoactinomyces viridis)).